The chain runs to 387 residues: Sorting nexin-7 (387 aa).

The PX domain occupies 30 to 151 (KDLFITVDEP…IFLTAQAWEL (122 aa)). A 1,2-diacyl-sn-glycero-3-phospho-(1D-myo-inositol-3-phosphate)-binding residues include arginine 73, glutamine 75, lysine 103, and arginine 117. Residues 178-387 (GVKNRPEEFM…HLEEASEDKP (210 aa)) enclose the BAR domain.

This sequence belongs to the sorting nexin family. As to quaternary structure, heterodimer; heterodimerizes with SNX4.

Its subcellular location is the early endosome membrane. Involved in the regulation of endocytosis and in several stages of intracellular trafficking. Together with SNX4, involved in autophagosome assembly by regulating trafficking and recycling of phospholipid scramblase ATG9A. The chain is Sorting nexin-7 from Homo sapiens (Human).